The chain runs to 2339 residues: DNA-directed RNA polymerase III subunit RPC1 (2339 aa).

7 residues coordinate Zn(2+): cysteine 88, cysteine 91, cysteine 98, histidine 101, cysteine 128, cysteine 131, and cysteine 175. Mg(2+)-binding residues include aspartate 611, aspartate 613, and aspartate 615. The tract at residues proline 955–glutamate 967 is bridging helix. 2 disordered regions span residues glutamate 1503 to tyrosine 1557 and leucine 2038 to arginine 2079. A compositionally biased stretch (basic and acidic residues) spans proline 1509 to asparagine 1520. Over residues tyrosine 1521–tyrosine 1557 the composition is skewed to low complexity. Positions leucine 2038–asparagine 2047 are enriched in basic and acidic residues. The span at aspartate 2049–asparagine 2059 shows a compositional bias: low complexity.

Belongs to the RNA polymerase beta' chain family. Component of the RNA polymerase III (Pol III) complex consisting of 17 subunits.

The protein localises to the nucleus. The catalysed reaction is RNA(n) + a ribonucleoside 5'-triphosphate = RNA(n+1) + diphosphate. In terms of biological role, DNA-dependent RNA polymerase catalyzes the transcription of DNA into RNA using the four ribonucleoside triphosphates as substrates. Largest and catalytic core component of RNA polymerase III which synthesizes small RNAs, such as 5S rRNA and tRNAs. Forms the polymerase active center together with the second largest subunit. A single-stranded DNA template strand of the promoter is positioned within the central active site cleft of Pol III. A bridging helix emanates from RPC1 and crosses the cleft near the catalytic site and is thought to promote translocation of Pol III by acting as a ratchet that moves the RNA-DNA hybrid through the active site by switching from straight to bent conformations at each step of nucleotide addition. The chain is DNA-directed RNA polymerase III subunit RPC1 from Plasmodium falciparum.